Reading from the N-terminus, the 113-residue chain is UPF0102 protein Ccon26_01140 (113 aa).

It belongs to the UPF0102 family.

The protein is UPF0102 protein Ccon26_01140 of Campylobacter concisus (strain 13826).